The primary structure comprises 193 residues: Peptidyl-tRNA hydrolase (193 aa).

Tyrosine 16 provides a ligand contact to tRNA. Histidine 21 (proton acceptor) is an active-site residue. TRNA-binding residues include phenylalanine 67, asparagine 69, and asparagine 115.

Belongs to the PTH family. In terms of assembly, monomer.

The protein localises to the cytoplasm. The enzyme catalyses an N-acyl-L-alpha-aminoacyl-tRNA + H2O = an N-acyl-L-amino acid + a tRNA + H(+). In terms of biological role, hydrolyzes ribosome-free peptidyl-tRNAs (with 1 or more amino acids incorporated), which drop off the ribosome during protein synthesis, or as a result of ribosome stalling. Functionally, catalyzes the release of premature peptidyl moieties from peptidyl-tRNA molecules trapped in stalled 50S ribosomal subunits, and thus maintains levels of free tRNAs and 50S ribosomes. This is Peptidyl-tRNA hydrolase from Vesicomyosocius okutanii subsp. Calyptogena okutanii (strain HA).